A 173-amino-acid chain; its full sequence is Translation initiation factor IF-3 (173 aa).

It belongs to the IF-3 family. As to quaternary structure, monomer.

It is found in the cytoplasm. Functionally, IF-3 binds to the 30S ribosomal subunit and shifts the equilibrium between 70S ribosomes and their 50S and 30S subunits in favor of the free subunits, thus enhancing the availability of 30S subunits on which protein synthesis initiation begins. This Aromatoleum aromaticum (strain DSM 19018 / LMG 30748 / EbN1) (Azoarcus sp. (strain EbN1)) protein is Translation initiation factor IF-3.